A 182-amino-acid chain; its full sequence is MASMAATTNFTKSMLFPFSHVSGNASLNSQRRTWPKQYKSKNGYRSLRVNGLFGGGNKDNNSEDGQSKAGIFGNMQNMYETVKKAQMVVQVEAVRVQKELAAAEFDGYCAGELVKVTLSGNQQPIRTDITEAAMELGSEKLSQLVTEAYKDAHAKSVVAMKERMSDLAQSLGMPPGLSEGMK.

Residues 1–48 constitute a chloroplast transit peptide; it reads MASMAATTNFTKSMLFPFSHVSGNASLNSQRRTWPKQYKSKNGYRSLR.

This sequence belongs to the YbaB/EbfC family. Homodimer. Interacts with ALB3 and ALB4.

It localises to the plastid. The protein resides in the chloroplast stroma. Participates with ALB4 in thylakoid protein targeting. May function with specific subset of thylakoidal proteins. Binds to DNA and alters its conformation. May be involved in regulation of gene expression, nucleoid organization and DNA protection. The chain is Nucleoid-associated protein At2g24020, chloroplastic from Arabidopsis thaliana (Mouse-ear cress).